We begin with the raw amino-acid sequence, 259 residues long: Polycomb group RING finger protein 1 (259 aa).

Ala2 carries the post-translational modification N-acetylalanine. At Ser3 the chain carries Phosphoserine. A Glycyl lysine isopeptide (Lys-Gly) (interchain with G-Cter in SUMO2) cross-link involves residue Lys24. An RING-type zinc finger spans residues 47 to 86 (CCLCAGYFVDATTITECLHTFCKSCIVKYLQTSKYCPMCN). Residues 86–247 (NIKIHETQPL…LSHWFGKPSP (162 aa)) form a necessary for repressor activity region. Residue Lys88 forms a Glycyl lysine isopeptide (Lys-Gly) (interchain with G-Cter in SUMO2) linkage. Residues 150-255 (LPFSSFDHSK…SPLLLQYSVK (106 aa)) form a required for the interaction with the KDM2B-SKP1 heterodimeric complex region. An RING-finger and WD40-associated ubiquitin-like domain (RAWUL); sufficient for interaction with BCOR and BCORL1 region spans residues 167 to 255 (EQLSLCLERL…SPLLLQYSVK (89 aa)).

As to quaternary structure, interacts with BCORL1, forming heterodimers. The PCGF1-BCORL1 heterodimeric complex interacts with the KDM2B-SKP1 heterodimeric complex to form a homotetrameric polycomb repression complex 1 (PRC1.1). Component of the repressive BCOR complex containing a Polycomb group subcomplex at least composed of RYBP, RING1 and RNF2/RING2. Specifically interacts with BCOR, RING1 and RNF2/RING2. Component of a PRC1-like complex. Interacts with CBX6, CBX7 and CBX8. Interacts with DPPA4, NANOG, POU5F1 and RYBP.

Its subcellular location is the nucleus. Its function is as follows. Component of the Polycomb group (PcG) multiprotein BCOR complex, a complex required to maintain the transcriptionally repressive state of some genes, such as BCL6 and the cyclin-dependent kinase inhibitor, CDKN1A. Transcriptional repressor that may be targeted to the DNA by BCL6; this transcription repressor activity may be related to PKC signaling pathway. Represses CDKN1A expression by binding to its promoter, and this repression is dependent on the retinoic acid response element (RARE element). Promotes cell cycle progression and enhances cell proliferation as well. May have a positive role in tumor cell growth by down-regulating CDKN1A. Component of a Polycomb group (PcG) multiprotein PRC1-like complex, a complex class required to maintain the transcriptionally repressive state of many genes, including Hox genes, throughout development. PcG PRC1 complex acts via chromatin remodeling and modification of histones; it mediates monoubiquitination of histone H2A 'Lys-119', rendering chromatin heritably changed in its expressibility. Within the PRC1-like complex, regulates RNF2 ubiquitin ligase activity. Regulates the expression of DPPA4 and NANOG in the NT2 embryonic carcinoma cells. In Bos taurus (Bovine), this protein is Polycomb group RING finger protein 1 (PCGF1).